A 1673-amino-acid polypeptide reads, in one-letter code: MEDSDDSEAKLREEIEAELDKISISSLENDEVENDSVSDTQSDSSDTDLLELPESVLHYINVIKNKSKTAEELILQDVEDTDIFSDYKKGCNHGTVTDSHMHLRTGSLPESKANAEQLMKILSVIEKEEFMRSLAPSARCVSVREIITPDTPMDEYILPDEADLSFGYFEVEERCRKSFEAWQDKQQELEEKDKETLEAQNEREKRTFQEEDEKRQCWMRQFEVEKKHLEDLQKQDQDKMNDELHKEEKIWKEKYRQHEEHIRNLHLKMEEERTRLSELQEKEKARLFKLRYDAAVKIQATYRASVTYRKYSPIIKEQMEKKRRRAQELKEKEAKIRQKEEEKRRRLEEEQRVEEEKKKKMLEERRRREREYEEKKSILRQEREEQRSKEVIRLREHAHSPLIITCALKKGDCHGKQQAIAHVPKGKGTIAKESVDSNSKKQEDACLAQQLNKRENTHVQQLAMKKSTGIKLKPNQAILVELKMNEKNESLPKLKINENLSKNQCSEQPSDQEFNAENVDQKNELENSNLKESVNEQYPWQGLESDTQTEEHVEHVREEKVGQETEKLFGFNQEVSAEDSKQAQGVMEETREGLAEEIEIKEMTQQGGPSDENNSSPISMQKSLPSLTPDNPEPVERSVTLEEDQETDLKSERIEEIPEEGVLSCDAAVINADASVHTEGEADLQDSASGKLAPSEEAGSHSANNLLATEEVEDSPKSEIQEALEKGQQTKAEADGVLTCSVSQLTVLSSVEERRLAWVKTFKPWAEIFEQNQHKKIVKKRRLVKCPPNTMPPLDPSAILQYGPWKSLKQVPVITFQGLPGCSLSTLAECSNLQILSLRRCGLTSLQGLSHCTRLKYIDAQENHIEAISCENLENLSVVLLNNNLLTSIHGFDGCTNLQSLELSHNKITRISGLESLKYLQELTVDHNQLISTKGLCEAPTIVYLDCSHNHLTGIDGIGNCGLLQIIKLQGNYLREPPSLRNHVLLRELHLDDNSISSVEGLSSCWLPLLQYLSISQNSLATIVPLFHLVSLEKLDVSNNCLSDLTNVMCWFNACYSLRELCLTGNPVLQEINWRDSILKTLPALRVLNGDMLNSYANDRIEEHYHQDLRCLLALCQYQLQEFNLLPEKYITQKRDILTLHAVDRLSQYYKDLMKLSHECRRAHEQGDVNTTERSAAETNKNHPDFSNTDSALQNKTLHAQTNSCEADSPATSPNPLDTVFRPSTSHCEELRGRNQEKLMAHKSEQSRISSRSNSRASFIEMKMADSPMSNHHNAERSSPTKAAMVIQAQWRSYIAHRQINCSAEMHPTTTEPLQDPLINNQTTSNEERRKTNMDIQEQREKAALHIQAVWKGFILRKKLATARKAIKDEESGEEYEEIDLEDFEFDEDALEKDWPALDSTGFPSQTLPLSNQLPWPKNSRTLRHDETSPTIPVRPAQAWLCNEKENVMSSEYTQLSSRSESGILSWTPDSKTSRKNLLQSEKEEKISEEWGFKDISTAQQMLKRAKKMKSKKLRKKLEPSVRLALFKKAKNKVSVTKSSKKTQLRRDNYFEAHISSQDEEEEAVSKATAAKEKLERSQEYTYQWLHTQVGFPEATSSRNLKCNHFLPELDPDVLNGGRVQLVARLVSREDTDLDLFSMTSASALSVNKDKKSQTHRYSTGSSSKLWFPSELI.

Disordered regions lie at residues 22–48 and 189–208; these read ISIS…SDTD and LEEK…KRTF. The stretch at 34 to 59 is one LRR 1 repeat; it reads NDSVSDTQSDSSDTDLLELPESVLHY. One copy of the LRR 2 repeat lies at 216 to 239; that stretch reads QCWMRQFEVEKKHLEDLQKQDQDK. Positions 291 to 320 constitute an IQ 1 domain; sequence RYDAAVKIQATYRASVTYRKYSPIIKEQME. The interval 324–374 is disordered; sequence RRAQELKEKEAKIRQKEEEKRRRLEEEQRVEEEKKKKMLEERRRREREYEE. Positions 326–374 are enriched in basic and acidic residues; sequence AQELKEKEAKIRQKEEEKRRRLEEEQRVEEEKKKKMLEERRRREREYEE. The stretch at 491–516 is one LRR 3 repeat; it reads LPKLKINENLSKNQCSEQPSDQEFNA. 2 disordered regions span residues 544 to 658 and 679 to 702; these read ESDT…EEIP and EGEA…GSHS. 2 stretches are compositionally biased toward basic and acidic residues: residues 549 to 567 and 588 to 602; these read TEEH…ETEK and EETR…EIKE. Residues 603-629 are compositionally biased toward polar residues; the sequence is MTQQGGPSDENNSSPISMQKSLPSLTP. One copy of the LRR 4 repeat lies at 641-665; sequence LEEDQETDLKSERIEEIPEEGVLSC. Over residues 647 to 656 the composition is skewed to basic and acidic residues; that stretch reads TDLKSERIEE. LRR repeat units lie at residues 830–852, 853–873, 874–894, 895–919, 921–939, 940–961, 962–983, 984–1005, 1007–1029, 1030–1054, and 1067–1090; these read CSNL…LSHC, TRLK…CENL, ENLS…GFDG, CTNL…SLKY, QELT…LCEA, PTIV…IGNC, GLLQ…LRNH, VLLR…LSSC, LPLL…LFHL, VSLE…WFNA, and PVLQ…VLNG. 2 disordered regions span residues 1163–1230 and 1308–1330; these read AHEQ…HCEE and PTTT…EERR. Composition is skewed to polar residues over residues 1168-1226 and 1308-1325; these read DVNT…PSTS and PTTT…QTTS. 2 IQ domains span residues 1280–1309 and 1340–1369; these read PTKA…MHPT and REKA…AIKD. One copy of the LRR 16 repeat lies at 1378–1405; it reads EIDLEDFEFDEDALEKDWPALDSTGFPS.

The sequence is that of Leucine-rich repeat- and IQ domain-containing protein 1 (Lrriq1) from Mus musculus (Mouse).